We begin with the raw amino-acid sequence, 301 residues long: uncharacterized protein (301 aa).

This is an uncharacterized protein from Escherichia coli (strain K12).